Reading from the N-terminus, the 493-residue chain is Cobyric acid synthase (493 aa).

Positions 252 to 441 constitute a GATase cobBQ-type domain; the sequence is DLKITVIRLP…LHGLLENGPW (190 aa). Cysteine 333 (nucleophile) is an active-site residue. Histidine 433 is an active-site residue.

Belongs to the CobB/CobQ family. CobQ subfamily.

Its pathway is cofactor biosynthesis; adenosylcobalamin biosynthesis. Functionally, catalyzes amidations at positions B, D, E, and G on adenosylcobyrinic A,C-diamide. NH(2) groups are provided by glutamine, and one molecule of ATP is hydrogenolyzed for each amidation. This chain is Cobyric acid synthase, found in Thermosynechococcus vestitus (strain NIES-2133 / IAM M-273 / BP-1).